The primary structure comprises 133 residues: MFRRIVPVLGLALGLGLASQAAMAQEQSPPPPPAVQGTPGKDFTGVSPANLAGIMNYCVEQQYVSYDEGNPVLYGLSEKYKATEQTVGNFDYALGTAGYFDSNGKRFYLVAYTNEDDRRAACHAAVKAAQPML.

Residues 1–24 (MFRRIVPVLGLALGLGLASQAAMA) form the signal peptide. The tract at residues 23–43 (MAQEQSPPPPPAVQGTPGKDF) is disordered. Q25 is subject to Pyrrolidone carboxylic acid.

The alcohol dehydrogenase multicomponent enzyme system is composed of a dehydrogenase subunit I (AdhA), a cytochrome c subunit II (AdhB) and a subunit III (AdhS).

It localises to the cell membrane. Part of the alcohol dehydrogenase multicomponent enzyme system which is involved in the production of acetic acid and in the ethanol oxidase respiratory chain. Does not play an obligatory role for the alcohol dehydrogenase (ADH) activity. The polypeptide is Alcohol dehydrogenase, 15 kDa subunit (Gluconobacter oxydans (strain 621H) (Gluconobacter suboxydans)).